A 592-amino-acid chain; its full sequence is Bifunctional purine biosynthesis protein ADE17 (592 aa).

The region spanning 1–147 (MANYTKTAIL…KNHARVTILS (147 aa)) is the MGS-like domain. IMP is bound by residues 35–38 (SGGT), 65–68 (RVKT), 102–103 (CN), and 126–127 (DI). The active-site Proton donor/acceptor; for FAICAR cyclization activity is the Lys-138. 5-amino-1-(5-phospho-beta-D-ribosyl)imidazole-4-carboxamide is bound by residues 206–207 (RY), His-267, Gly-315, Asp-338, Asn-430, and Arg-450. His-267 acts as the Proton acceptor; for AICAR formyltransferase activity in catalysis. Ile-451 is a (6R)-10-formyltetrahydrofolate binding site. A 5-amino-1-(5-phospho-beta-D-ribosyl)imidazole-4-carboxamide-binding site is contributed by Phe-541. (6R)-10-formyltetrahydrofolate is bound by residues Asp-546 and 565-566 (SV). A 5-amino-1-(5-phospho-beta-D-ribosyl)imidazole-4-carboxamide-binding site is contributed by Arg-588.

Belongs to the PurH family. Homodimer.

The protein localises to the cytoplasm. The protein resides in the cytosol. The catalysed reaction is (6R)-10-formyltetrahydrofolate + 5-amino-1-(5-phospho-beta-D-ribosyl)imidazole-4-carboxamide = 5-formamido-1-(5-phospho-D-ribosyl)imidazole-4-carboxamide + (6S)-5,6,7,8-tetrahydrofolate. The enzyme catalyses IMP + H2O = 5-formamido-1-(5-phospho-D-ribosyl)imidazole-4-carboxamide. The protein operates within purine metabolism; IMP biosynthesis via de novo pathway; 5-formamido-1-(5-phospho-D-ribosyl)imidazole-4-carboxamide from 5-amino-1-(5-phospho-D-ribosyl)imidazole-4-carboxamide (10-formyl THF route): step 1/1. It participates in purine metabolism; IMP biosynthesis via de novo pathway; IMP from 5-formamido-1-(5-phospho-D-ribosyl)imidazole-4-carboxamide: step 1/1. Bifunctional enzyme that catalyzes the last two steps of purine biosynthesis. Acts as a transformylase that incorporates a formyl group to the AMP analog AICAR (5-amino-1-(5-phospho-beta-D-ribosyl)imidazole-4-carboxamide) to produce the intermediate formyl-AICAR (FAICAR). Also catalyzes the cyclization of FAICAR to IMP. This is Bifunctional purine biosynthesis protein ADE17 from Saccharomyces cerevisiae (strain ATCC 204508 / S288c) (Baker's yeast).